A 211-amino-acid polypeptide reads, in one-letter code: Cytidylate kinase (211 aa).

Gly-9 to Thr-17 lines the ATP pocket.

It belongs to the cytidylate kinase family. Type 1 subfamily.

Its subcellular location is the cytoplasm. It catalyses the reaction CMP + ATP = CDP + ADP. The catalysed reaction is dCMP + ATP = dCDP + ADP. This chain is Cytidylate kinase, found in Paramagnetospirillum magneticum (strain ATCC 700264 / AMB-1) (Magnetospirillum magneticum).